Consider the following 125-residue polypeptide: Mite group 2 allergen Gly d 2.02 (125 aa).

This sequence belongs to the NPC2 family.

It is found in the secreted. This chain is Mite group 2 allergen Gly d 2.02, found in Glycyphagus domesticus (House itch mite).